A 137-amino-acid polypeptide reads, in one-letter code: Large ribosomal subunit protein eL28 (137 aa).

Serine 2 carries the post-translational modification N-acetylserine. Residues lysine 58 and lysine 65 each participate in a glycyl lysine isopeptide (Lys-Gly) (interchain with G-Cter in SUMO2) cross-link. At serine 115 the chain carries Phosphoserine.

It belongs to the eukaryotic ribosomal protein eL28 family. As to quaternary structure, component of the large ribosomal subunit.

The protein localises to the cytoplasm. Functionally, component of the large ribosomal subunit. The ribosome is a large ribonucleoprotein complex responsible for the synthesis of proteins in the cell. This is Large ribosomal subunit protein eL28 (RPL28) from Bos taurus (Bovine).